A 344-amino-acid chain; its full sequence is Ion-translocating oxidoreductase complex subunit D (344 aa).

4 consecutive transmembrane segments (helical) span residues 23–43 (LVLG…GPGT), 44–64 (LLNL…MLAL), 77–99 (SALV…WLTL), and 120–140 (PFNP…LEMT). FMN phosphoryl threonine is present on T172. A run of 5 helical transmembrane segments spans residues 198–218 (LGSA…LFLL), 222–242 (LFTW…SLLF), 252–272 (GSPL…FIVT), 285–305 (LVFG…GGYP), and 306–326 (DGMA…DYYT).

The protein belongs to the NqrB/RnfD family. In terms of assembly, the complex is composed of six subunits: RnfA, RnfB, RnfC, RnfD, RnfE and RnfG. Requires FMN as cofactor.

Its subcellular location is the cell inner membrane. Part of a membrane-bound complex that couples electron transfer with translocation of ions across the membrane. This chain is Ion-translocating oxidoreductase complex subunit D, found in Pseudomonas aeruginosa (strain LESB58).